A 123-amino-acid polypeptide reads, in one-letter code: Small ribosomal subunit protein uS12 (123 aa).

A disordered region spans residues 1–25; sequence MPTINQLIRKRRKSSLARKKSPALQ. Over residues 8–21 the composition is skewed to basic residues; that stretch reads IRKRRKSSLARKKS. A 3-methylthioaspartic acid modification is found at Asp89.

Belongs to the universal ribosomal protein uS12 family. As to quaternary structure, part of the 30S ribosomal subunit. Contacts proteins S8 and S17. May interact with IF1 in the 30S initiation complex.

Its function is as follows. With S4 and S5 plays an important role in translational accuracy. Interacts with and stabilizes bases of the 16S rRNA that are involved in tRNA selection in the A site and with the mRNA backbone. Located at the interface of the 30S and 50S subunits, it traverses the body of the 30S subunit contacting proteins on the other side and probably holding the rRNA structure together. The combined cluster of proteins S8, S12 and S17 appears to hold together the shoulder and platform of the 30S subunit. This Chlamydia pneumoniae (Chlamydophila pneumoniae) protein is Small ribosomal subunit protein uS12.